Here is a 121-residue protein sequence, read N- to C-terminus: UPF0295 protein ABC1323 (121 aa).

2 helical membrane passes run 14–34 and 41–61; these read TFAL…IFFK and VIAM…YFFI.

The protein belongs to the UPF0295 family.

Its subcellular location is the cell membrane. The sequence is that of UPF0295 protein ABC1323 from Shouchella clausii (strain KSM-K16) (Alkalihalobacillus clausii).